The sequence spans 290 residues: 33 kDa chaperonin (290 aa).

Intrachain disulfides connect Cys-235–Cys-237 and Cys-268–Cys-271.

The protein belongs to the HSP33 family. Post-translationally, under oxidizing conditions two disulfide bonds are formed involving the reactive cysteines. Under reducing conditions zinc is bound to the reactive cysteines and the protein is inactive.

The protein localises to the cytoplasm. Its function is as follows. Redox regulated molecular chaperone. Protects both thermally unfolding and oxidatively damaged proteins from irreversible aggregation. Plays an important role in the bacterial defense system toward oxidative stress. This Streptococcus pneumoniae (strain JJA) protein is 33 kDa chaperonin.